The primary structure comprises 885 residues: Alanine--tRNA ligase (885 aa).

Zn(2+) is bound by residues His-564, His-568, Cys-676, and His-680.

It belongs to the class-II aminoacyl-tRNA synthetase family. Zn(2+) serves as cofactor.

It localises to the cytoplasm. The catalysed reaction is tRNA(Ala) + L-alanine + ATP = L-alanyl-tRNA(Ala) + AMP + diphosphate. Catalyzes the attachment of alanine to tRNA(Ala) in a two-step reaction: alanine is first activated by ATP to form Ala-AMP and then transferred to the acceptor end of tRNA(Ala). Also edits incorrectly charged Ser-tRNA(Ala) and Gly-tRNA(Ala) via its editing domain. The polypeptide is Alanine--tRNA ligase (Brucella abortus (strain 2308)).